We begin with the raw amino-acid sequence, 198 residues long: Recombination protein RecR (198 aa).

The C4-type zinc-finger motif lies at 57 to 72 (CSVCGHITDRDPCYIC). A Toprim domain is found at 80-175 (SVVCVVQEPK…KVTRIAHGLP (96 aa)).

Belongs to the RecR family.

In terms of biological role, may play a role in DNA repair. It seems to be involved in an RecBC-independent recombinational process of DNA repair. It may act with RecF and RecO. The chain is Recombination protein RecR from Bacillus thuringiensis (strain Al Hakam).